Consider the following 186-residue polypeptide: Methylamine dehydrogenase light chain (186 aa).

A signal peptide (tat-type signal) is located at residues 1-57 (MLGKSQFDDLFEKMSRKVAGHTSRRGFIGRVGTAVAGVALVPLLPVDRRGRVSRANA). Disulfide bonds link Cys-78–Cys-143, Cys-84–Cys-116, Cys-91–Cys-176, Cys-93–Cys-141, Cys-101–Cys-132, and Cys-133–Cys-164. Residue Trp-112 is modified to Tryptophylquinone. A cross-link (tryptophan tryptophylquinone (Trp-Trp)) is located at residues 112–163 (WVASCYNPTDKQSYLISYRDCCGANVSGRCACLNTEGELPVYRPEFGNDIIW).

It belongs to the aromatic amine dehydrogenase light chain family. Heterotetramer of two light and two heavy chains. Tryptophan tryptophylquinone residue is required as a cofactor. Predicted to be exported by the Tat system. The position of the signal peptide cleavage has been experimentally proven. In terms of processing, tryptophan tryptophylquinone (TTQ) is formed by oxidation of the indole ring of a tryptophan to form tryptophylquinone followed by covalent cross-linking with another tryptophan residue.

Its subcellular location is the periplasm. The catalysed reaction is 2 oxidized [amicyanin] + methylamine + H2O = 2 reduced [amicyanin] + formaldehyde + NH4(+) + 2 H(+). Its pathway is one-carbon metabolism; methylamine degradation; formaldehyde from methylamine: step 1/1. Methylamine dehydrogenase carries out the oxidation of methylamine. Electrons are passed from methylamine dehydrogenase to amicyanin. The sequence is that of Methylamine dehydrogenase light chain (mauA) from Methylorubrum extorquens (strain ATCC 14718 / DSM 1338 / JCM 2805 / NCIMB 9133 / AM1) (Methylobacterium extorquens).